A 609-amino-acid chain; its full sequence is Protein NRT1/ PTR FAMILY 7.1 (609 aa).

Helical transmembrane passes span 67 to 87 and 109 to 129; these read IILLVNQGLATLAFFGVGVNL and WTGTVYMFSLVGAFLSDSYWG. Residue T133 is modified to Phosphothreonine. 10 consecutive transmembrane segments (helical) span residues 136–156, 173–193, 216–236, 243–263, 367–387, 402–422, 438–458, 474–494, 516–536, and 559–579; these read IFQVIFVIGVGLLSFVSWFFL, SSLGVAIFYLSVYLVAFGYGG, FFSYFYFALNVGALFSNTILV, LWTEGFLVSLGSAIVALVAFL, PIWLCTIIYSVIFTQMASLFV, IPAASMSVFDIFSVFVSTGIY, MGIGLIIGIMAMVAAGLTEIQ, ILWQIPQYVLVGASEVFMYVG, MASMALGNYVSSLMVNIVMAI, and FYFLIAALAAIDFVVYLIFAK.

This sequence belongs to the major facilitator superfamily. Proton-dependent oligopeptide transporter (POT/PTR) (TC 2.A.17) family. In terms of tissue distribution, expressed in flowers.

Its subcellular location is the membrane. The sequence is that of Protein NRT1/ PTR FAMILY 7.1 (NPF7.1) from Arabidopsis thaliana (Mouse-ear cress).